Consider the following 496-residue polypeptide: MAVKNIVAVDLGASSGRVMLATFHTATQHLTLKEIHRFSNTLVFQDNHHQWDLVALERDILTGLQQIDAMGIAPDSIGVDSWGVDYVLLDKNGQRVGLPYSYRDHRTDGVMAAVTAELGREAIYQHTGIQFLPFNTLYQLKALCDAPPDDLDKVEHLLMIPDYFHYRLTGNLVCEYTNASTTQLLNLEKKTWDGELLDYLGVPRRWLSDPVQPGHAVGNWTAPSGRQIPVTAVATHDTASAVVGAPLQSRDSAYLSSGTWSLMGIESDTPFNSPQALAANITNEGGVDDTYRVLKNIMGLWLLQRVCQERDIKDLGTLIQSATTLPAFVSLINPNDDRFINPPSMHQAIRDYCREHGQPVPQSDAELARCIFDSLALLYRQVVLELGELRHAPIRQLHIVGGGSQNAFLNQLCADVCQIPVLAGPVEASTLGNIGCQLMALGAVTDLAAFRHMLTHNFPLHRYTPRAESDFAGHWRRFQALSQPETAPQGKKETTQ.

13 to 17 serves as a coordination point for ATP; the sequence is ASSGR. Residues Gly83 and 236–238 each bind substrate; that span reads HDT. The Proton acceptor role is filled by Asp237. Thr259 contributes to the ATP binding site. Asn296 lines the substrate pocket. Gln304 contributes to the ATP binding site. Cys353 and Cys370 are joined by a disulfide. Gly402 is a binding site for ATP. Cys413 and Cys417 are oxidised to a cystine.

This sequence belongs to the rhamnulokinase family. Mg(2+) serves as cofactor.

The enzyme catalyses L-rhamnulose + ATP = L-rhamnulose 1-phosphate + ADP + H(+). The protein operates within carbohydrate degradation; L-rhamnose degradation; glycerone phosphate from L-rhamnose: step 2/3. Its function is as follows. Involved in the catabolism of L-rhamnose (6-deoxy-L-mannose). Catalyzes the transfer of the gamma-phosphate group from ATP to the 1-hydroxyl group of L-rhamnulose to yield L-rhamnulose 1-phosphate. The sequence is that of Rhamnulokinase from Pectobacterium atrosepticum (strain SCRI 1043 / ATCC BAA-672) (Erwinia carotovora subsp. atroseptica).